We begin with the raw amino-acid sequence, 387 residues long: Guanylate kinase 1 (387 aa).

Positions 137 to 319 constitute a Guanylate kinase-like domain; sequence EKPIVISGPS…CYKKLKNLLG (183 aa). 144–151 is a binding site for ATP; that stretch reads GPSGVGKG. Catalysis depends on residues Arg177, Arg270, and Arg281. ATP-binding residues include Asn304 and Asp305.

It belongs to the guanylate kinase family. In terms of assembly, monomer.

It catalyses the reaction GMP + ATP = GDP + ADP. Functionally, essential for recycling GMP and indirectly, cGMP. Required for normal development of the gametophyte and embryo, in association with GK2. The protein is Guanylate kinase 1 (GK-1) of Arabidopsis thaliana (Mouse-ear cress).